The chain runs to 628 residues: tRNA uridine 5-carboxymethylaminomethyl modification enzyme MnmG (628 aa).

Gly-14 to Gly-19 contributes to the FAD binding site. Gly-273 to Phe-287 contributes to the NAD(+) binding site.

Belongs to the MnmG family. In terms of assembly, homodimer. Heterotetramer of two MnmE and two MnmG subunits. The cofactor is FAD.

It is found in the cytoplasm. In terms of biological role, NAD-binding protein involved in the addition of a carboxymethylaminomethyl (cmnm) group at the wobble position (U34) of certain tRNAs, forming tRNA-cmnm(5)s(2)U34. The polypeptide is tRNA uridine 5-carboxymethylaminomethyl modification enzyme MnmG (Bacillus velezensis (strain DSM 23117 / BGSC 10A6 / LMG 26770 / FZB42) (Bacillus amyloliquefaciens subsp. plantarum)).